The primary structure comprises 20 residues: Cytochrome c oxidase subunit 6A1, mitochondrial (20 aa).

This sequence belongs to the cytochrome c oxidase subunit 6A family. As to quaternary structure, component of the cytochrome c oxidase (complex IV, CIV), a multisubunit enzyme composed of 14 subunits. The complex is composed of a catalytic core of 3 subunits MT-CO1, MT-CO2 and MT-CO3, encoded in the mitochondrial DNA, and 11 supernumerary subunits COX4I, COX5A, COX5B, COX6A, COX6B, COX6C, COX7A, COX7B, COX7C, COX8 and NDUFA4, which are encoded in the nuclear genome. The complex exists as a monomer or a dimer and forms supercomplexes (SCs) in the inner mitochondrial membrane with NADH-ubiquinone oxidoreductase (complex I, CI) and ubiquinol-cytochrome c oxidoreductase (cytochrome b-c1 complex, complex III, CIII), resulting in different assemblies (supercomplex SCI(1)III(2)IV(1) and megacomplex MCI(2)III(2)IV(2)). In terms of tissue distribution, liver specific isoform.

The protein localises to the mitochondrion inner membrane. It participates in energy metabolism; oxidative phosphorylation. Component of the cytochrome c oxidase, the last enzyme in the mitochondrial electron transport chain which drives oxidative phosphorylation. The respiratory chain contains 3 multisubunit complexes succinate dehydrogenase (complex II, CII), ubiquinol-cytochrome c oxidoreductase (cytochrome b-c1 complex, complex III, CIII) and cytochrome c oxidase (complex IV, CIV), that cooperate to transfer electrons derived from NADH and succinate to molecular oxygen, creating an electrochemical gradient over the inner membrane that drives transmembrane transport and the ATP synthase. Cytochrome c oxidase is the component of the respiratory chain that catalyzes the reduction of oxygen to water. Electrons originating from reduced cytochrome c in the intermembrane space (IMS) are transferred via the dinuclear copper A center (CU(A)) of subunit 2 and heme A of subunit 1 to the active site in subunit 1, a binuclear center (BNC) formed by heme A3 and copper B (CU(B)). The BNC reduces molecular oxygen to 2 water molecules unsing 4 electrons from cytochrome c in the IMS and 4 protons from the mitochondrial matrix. The chain is Cytochrome c oxidase subunit 6A1, mitochondrial (COX6A1) from Canis lupus familiaris (Dog).